A 2150-amino-acid chain; its full sequence is A disintegrin and metalloproteinase with thrombospondin motifs gon-1 (2150 aa).

The first 28 residues, 1 to 28, serve as a signal peptide directing secretion; the sequence is MRSIGGSFHLLQPVVAALILLVVCLVYA. Positions 29 to 273 are excised as a propeptide; the sequence is LQSGSGTISE…VIERKARSRR (245 aa). N-linked (GlcNAc...) asparagine glycosylation is found at N134, N213, N243, and N248. The Peptidase M12B domain maps to 280–493; that stretch reads HYVEVLVVAD…GQTQCLFDQP (214 aa). Cystine bridges form between C402/C488 and C440/C470. A Zn(2+)-binding site is contributed by H424. E425 is a catalytic residue. Residues H428 and H434 each contribute to the Zn(2+) site. The 85-residue stretch at 503-587 folds into the Disintegrin domain; it reads FVRDEPGKKY…RLAPESLTKI (85 aa). The TSP type-1 1 domain maps to 588 to 643; the sequence is DGQWGDWRSWGECSRTCGGGVQKGLRDCDSPKPRNGGKYCVGQRERYRSCNTQECP. Cystine bridges form between C600–C637, C604–C642, and C615–C627. A glycan (N-linked (GlcNAc...) asparagine) is linked at N842. TSP type-1 domains follow at residues 943–1003, 1004–1057, 1060–1115, 1116–1165, 1168–1227, 1228–1277, 1280–1339, 1352–1409, 1410–1469, 1474–1524, and 1527–1585; these read CSTR…IDCS, GRKW…RECN, PCPR…HACT, WWQF…KPCH, SCPK…GTCP, FWRN…QTCH, PCTS…DTCD, PPIR…RDCS, YWKM…EPCP, HIGS…ELCP, and TNNS…PPCR. N-linked (GlcNAc...) asparagine glycosylation is found at N1139 and N1199. N-linked (GlcNAc...) asparagine glycosylation is found at N1370 and N1432. 4 N-linked (GlcNAc...) asparagine glycosylation sites follow: N1528, N1590, N1606, and N1654. Positions 1590–1614 are disordered; sequence NKTSSASMTSLSSSNSNTTSSASAS. Low complexity predominate over residues 1592–1614; the sequence is TSSASMTSLSSSNSNTTSSASAS. TSP type-1 domains follow at residues 1621-1675, 1678-1736, 1737-1793, 1794-1866, and 1867-1924; these read PVVS…VRCR, HCPR…VACP, AYRW…DTSN, CPYE…NPCD, and SEFK…RNCL. Disulfide bonds link C1679–C1718, C1690–C1694, C1690–C1730, C1694–C1735, C1705–C1718, and C1730–C1735. Residues N1828 and N1855 are each glycosylated (N-linked (GlcNAc...) asparagine). Residues 1924 to 2123 form the GON domain; sequence LPSTCQELKS…RYKGLIFEVN (200 aa). N1942, N1960, and N1997 each carry an N-linked (GlcNAc...) asparagine glycan.

The cofactor is Zn(2+). Expressed by the gonadal distal tip cells (DTCs). Expressed in muscles, including body wall, vulval and anal depressor muscles. Expressed in motor neurons and in ASI and ASJ neurons.

Its subcellular location is the secreted. It localises to the extracellular space. The protein localises to the extracellular matrix. The protein resides in the basement membrane. It is found in the endoplasmic reticulum. Its subcellular location is the golgi apparatus. Functionally, secreted metalloprotease required for distal tip cell (DTC) migration along the body wall basement membranes, a key step that promotes gonad morphogenesis. Probably acts by remodeling the basement membrane during cell migration. Required to restrict presynaptic growth at the neuromuscular junctions (NMJ) in late larval stage and in adult motor neurons, probably by controlling collagen IV emb-9 degradation, a component of the synapse basement membrane. Also involved in the organization of adult muscle morphology. Has a protease-independent function in promoting the transport from the endoplasmic reticulum to the Golgi apparatus of a variety of secretory cargos. Required for the secretion of insulin-like peptide ins-7, daf-28 and ins-18 and TGF beta-like protein daf-7. In peripheral tissues, negatively regulates insulin-mediated daf-16 translocation and thereby negatively regulates lifespan and dauer formation. The protein is A disintegrin and metalloproteinase with thrombospondin motifs gon-1 of Caenorhabditis elegans.